The following is a 760-amino-acid chain: Phosphatidylinositol N-acetylglucosaminyltransferase subunit Q (760 aa).

5 helical membrane-spanning segments follow: residues T278 to G298, L349 to W371, C378 to Y400, L446 to L468, and L475 to Y497. The interval L696–G748 is disordered.

The protein belongs to the PIGQ family. Component of the glycosylphosphatidylinositol-N-acetylglucosaminyltransferase (GPI-GnT) complex composed at least by PIGA, PIGC, PIGH, PIGP, PIGQ, PIGY and DPM2. Interacts with PIGA, PIGH and PIGC.

Its subcellular location is the membrane. It participates in glycolipid biosynthesis; glycosylphosphatidylinositol-anchor biosynthesis. Its function is as follows. Part of the glycosylphosphatidylinositol-N-acetylglucosaminyltransferase (GPI-GnT) complex that catalyzes the transfer of N-acetylglucosamine from UDP-N-acetylglucosamine to phosphatidylinositol and participates in the first step of GPI biosynthesis. The chain is Phosphatidylinositol N-acetylglucosaminyltransferase subunit Q from Homo sapiens (Human).